The following is a 532-amino-acid chain: 2,3-bisphosphoglycerate-independent phosphoglycerate mutase (532 aa).

Mn(2+)-binding residues include aspartate 15 and serine 65. Catalysis depends on serine 65, which acts as the Phosphoserine intermediate. Substrate-binding positions include histidine 126, 156 to 157 (RD), arginine 188, arginine 194, 258 to 261 (RPDR), and lysine 331. Positions 398, 402, 439, 440, and 457 each coordinate Mn(2+).

It belongs to the BPG-independent phosphoglycerate mutase family. In terms of assembly, monomer. Mn(2+) serves as cofactor.

The enzyme catalyses (2R)-2-phosphoglycerate = (2R)-3-phosphoglycerate. The protein operates within carbohydrate degradation; glycolysis; pyruvate from D-glyceraldehyde 3-phosphate: step 3/5. Functionally, catalyzes the interconversion of 2-phosphoglycerate and 3-phosphoglycerate. This chain is 2,3-bisphosphoglycerate-independent phosphoglycerate mutase, found in Synechocystis sp. (strain ATCC 27184 / PCC 6803 / Kazusa).